The chain runs to 89 residues: Large ribosomal subunit protein uL24 (89 aa).

The protein belongs to the universal ribosomal protein uL24 family. In terms of assembly, part of the 50S ribosomal subunit.

Its function is as follows. One of two assembly initiator proteins, it binds directly to the 5'-end of the 23S rRNA, where it nucleates assembly of the 50S subunit. One of the proteins that surrounds the polypeptide exit tunnel on the outside of the subunit. This Oenococcus oeni (strain ATCC BAA-331 / PSU-1) protein is Large ribosomal subunit protein uL24.